Reading from the N-terminus, the 253-residue chain is tRNA pseudouridine synthase A (253 aa).

Asp52 (nucleophile) is an active-site residue. Residue Tyr111 participates in substrate binding.

The protein belongs to the tRNA pseudouridine synthase TruA family. Homodimer.

It carries out the reaction uridine(38/39/40) in tRNA = pseudouridine(38/39/40) in tRNA. Formation of pseudouridine at positions 38, 39 and 40 in the anticodon stem and loop of transfer RNAs. The chain is tRNA pseudouridine synthase A from Methylobacterium radiotolerans (strain ATCC 27329 / DSM 1819 / JCM 2831 / NBRC 15690 / NCIMB 10815 / 0-1).